We begin with the raw amino-acid sequence, 437 residues long: Ankyrin repeat domain-containing protein OPG015 (437 aa).

3 ANK repeats span residues 117–146, 220–249, and 253–290; these read QDLLLYYLSNAYVEIDIVDLMVDHGAVIYK, GGRTLLYRAIYAGYIDLVSWLLENGANVNA, and NGYTCLDVAVDRGSVIARREAHLKILEILLREPLSIDC.

The protein belongs to the orthopoxvirus OPG015 family.

Functionally, may be involved in virus-host protein interaction through the ankyrin repeats. The chain is Ankyrin repeat domain-containing protein OPG015 (OPG015) from Monkeypox virus.